Consider the following 37-residue polypeptide: Potassium channel toxin alpha-KTx 15.3 (37 aa).

The residue at position 1 (Q1) is a Pyrrolidone carboxylic acid. Disulfide bonds link C8–C28, C13–C33, and C17–C35.

Expressed by the venom gland.

The protein resides in the secreted. Inhibits A-type (Kv4) voltage-gated potassium channels of striated neurons (Ki=131 nM), probably by acting as a pore blocker. Has also been shown to block ERG1/Kv11.1/KCNH2 potassium channels (IC(50)=7.9 uM). The presence of the Kv4-associated proteins DPP6 or DPP10 is mandatory to have high-affinity blockade of Kv4.2/KCND2 and Kv4.3/KCND3 channels (80-90% inhibition at 500 nM of toxin). In contrast, the presence of the Kv4-associated protein KChIP1/KCNIP1 does not enhance the affinity blockade (only 40% inhibition at 500 nM). In adult rat brain, the toxin binds to sites in the striatum, and cerebellum. It shares the same target in rat brain than AaTX1 (AC Q867F4) and BmTX3 (AC Q8I0L5). In DPP6 knockout mice, A-type currents are about 20-fold less affected by the toxin. In rodent models of Parkinson's disease, the toxin reduces motor symptoms and emotional and cognitive symptoms. The polypeptide is Potassium channel toxin alpha-KTx 15.3 (Androctonus mauritanicus mauritanicus (Scorpion)).